A 198-amino-acid chain; its full sequence is Ribonuclease HII (198 aa).

Positions 11–198 (TCIAGVDEVG…APVKRALGLA (188 aa)) constitute an RNase H type-2 domain. Residues Asp-17, Glu-18, and Asp-109 each coordinate a divalent metal cation.

Belongs to the RNase HII family. Mn(2+) serves as cofactor. Mg(2+) is required as a cofactor.

The protein localises to the cytoplasm. It carries out the reaction Endonucleolytic cleavage to 5'-phosphomonoester.. Endonuclease that specifically degrades the RNA of RNA-DNA hybrids. This is Ribonuclease HII from Pectobacterium carotovorum subsp. carotovorum (strain PC1).